The chain runs to 378 residues: Chitinase (378 aa).

Residues 1 to 28 (MNFTVKYSFLVICLLCCLLSTYVSVIEG) form the signal peptide. In terms of domain architecture, GH18 spans 53 to 378 (GIIQGYYPSW…AIEYFVESLH (326 aa)). The active-site Proton donor is the glutamate 174. Cysteine 220 and cysteine 230 form a disulfide bridge.

Belongs to the glycosyl hydrolase 18 family. In terms of assembly, forms a hetero-multimeric, high molecular weight complex composed of at least CHT1, SOAP AND WARP. Within the complex, may interact with WARP via a disulfide bond.

The protein localises to the secreted. Its subcellular location is the cytoplasmic vesicle. It localises to the secretory vesicle. The protein resides in the microneme. The catalysed reaction is Random endo-hydrolysis of N-acetyl-beta-D-glucosaminide (1-&gt;4)-beta-linkages in chitin and chitodextrins.. With respect to regulation, inhibited by allosamidin. In terms of biological role, endochitinase that cleaves beta-1,4-linkages between tri- and tetramers of N-acetylglucosamine (GlcNAc) from penta- and hexameric chitin oligomers. Does not cleave smaller chitin oligosaccharides. Required to cross the acellular, chitin-containing peritrophic matrix (PM) which is formed around the ingested blood meal in the mosquito midgut allowing the ookinete to invade the mosquito gut epithelium. This Plasmodium falciparum (isolate 3D7) protein is Chitinase.